The chain runs to 252 residues: Cell division protein ZapD (252 aa).

Belongs to the ZapD family. As to quaternary structure, interacts with FtsZ.

The protein localises to the cytoplasm. Its function is as follows. Cell division factor that enhances FtsZ-ring assembly. Directly interacts with FtsZ and promotes bundling of FtsZ protofilaments, with a reduction in FtsZ GTPase activity. The chain is Cell division protein ZapD from Cupriavidus necator (strain ATCC 17699 / DSM 428 / KCTC 22496 / NCIMB 10442 / H16 / Stanier 337) (Ralstonia eutropha).